Reading from the N-terminus, the 140-residue chain is Encapsulated ferritin-like protein (140 aa).

A Ca(2+)-binding site is contributed by E31. E32 provides a ligand contact to Fe cation. Ca(2+) is bound at residue E34. Residues E62 and H65 each contribute to the Fe cation site. A disordered region spans residues A100 to L140. Residues A100 to L140 are targeting peptide.

Belongs to the ferritin-like superfamily. EncFtn family. Monomers form antiparallel dimers which assemble in a decameric ring 7 nm in diameter and 4.5 nm thick with a central channel (construct without targeting peptide). Growth in Fe(2+)-rich medium induces oligomerization, the monomer does not bind metals. The target peptide probably extends away from the ring, to allow binding to the interior of the encapsulin nanocompartment shell. The cofactor is Fe(2+). Ca(2+) is required as a cofactor.

The protein localises to the encapsulin nanocompartment. It catalyses the reaction 4 Fe(2+) + O2 + 4 H(+) = 4 Fe(3+) + 2 H2O. Its activity is regulated as follows. Ferroxidase activity inhibited by Zn(2+). Mutants at Glu-31, Glu-34 and Trp-38 are also inhibited by Zn(2+). Cargo protein of a type 1 encapsulin nanocompartment. A ferritin-like ferroxidase that mineralizes iron inside the encapsulin nanocompartment. Converts Fe(2+) to Fe(3+) that is released to the exterior of the decameric complex for deposition in the encapsulin nanocompartment. In solution the decamer binds 10-15 iron cations; in the encapsulin nanocompartment the decamer can bind up to 48 ions, perhaps via its internal channel and on its exterior. The empty encapsulin nanocompartment sequesters about 2200 Fe ions while the cargo-loaded nanocompartment can maximally sequester about 4150 Fe ions. EncFtn retains ferroxidase activity when encapsulated. Flux in the active site di-iron metal center is thought to be controlled by the 'entry site' of the protein, which both attracts metal and controls the rate of iron oxidation. Encapsulation in the nanocompartment does not alter either function of this protein. The chain is Encapsulated ferritin-like protein from Rhodospirillum rubrum (strain ATCC 11170 / ATH 1.1.1 / DSM 467 / LMG 4362 / NCIMB 8255 / S1).